A 1458-amino-acid chain; its full sequence is ABC multidrug transporter B (1458 aa).

The next 5 membrane-spanning stretches (helical) occupy residues 30-50 (FSLL…VLII), 70-90 (LLWA…VLAV), 102-122 (ASIA…LLSC), 128-148 (STTP…FDIA), and 165-185 (IAIL…LEAV). N-linked (GlcNAc...) asparagine glycosylation occurs at asparagine 208. A helical membrane pass occupies residues 273–295 (WPLLSAVPPRACLAALNFCQPLL). The ABC transmembrane type-1 1 domain maps to 283–561 (ACLAALNFCQ…LVMALMTFVG (279 aa)). A glycan (N-linked (GlcNAc...) asparagine) is linked at asparagine 309. The next 5 membrane-spanning stretches (helical) occupy residues 314–334 (IGYG…VTMG), 387–407 (WQTI…IYLL), 411–431 (LGVA…GCLI), 501–521 (LGWT…YGIM), and 541–561 (LFAL…TFVG). One can recognise an ABC transporter 1 domain in the interval 626 to 853 (LTVKNATFAW…AGGYVSSFGL (228 aa)). An N-linked (GlcNAc...) asparagine glycan is attached at asparagine 630. 660–667 (GPSGCGKS) serves as a coordination point for ATP. Asparagine 702, asparagine 804, and asparagine 879 each carry an N-linked (GlcNAc...) asparagine glycan. An ABC transmembrane type-1 2 domain is found at 933-1182 (PNGRTGYYLG…LVTFWTNLET (250 aa)). The next 6 membrane-spanning stretches (helical) occupy residues 940–960 (YLGI…IGCW), 978–998 (LLAT…SGSI), 1016–1036 (AAIN…LMGI), 1040–1060 (YAAI…KVYL), 1125–1145 (LTLT…VLVV), and 1156–1176 (VGVA…LVTF). The region spanning 1219–1449 (IEFKSVSAEY…EGSYFSRLYA (231 aa)) is the ABC transporter 2 domain. ATP is bound at residue 1252-1259 (GRTGSGKT). Asparagine 1316 carries N-linked (GlcNAc...) asparagine glycosylation.

Belongs to the ABC transporter superfamily. ABCC family. Conjugate transporter (TC 3.A.1.208) subfamily.

The protein resides in the cell membrane. In terms of biological role, pleiotropic ABC efflux transporter that may be involved in A.fumigatus adaptation to azoles such as vorizonazole. The chain is ABC multidrug transporter B from Aspergillus fumigatus (strain ATCC MYA-4609 / CBS 101355 / FGSC A1100 / Af293) (Neosartorya fumigata).